A 104-amino-acid chain; its full sequence is Transcription elongation factor A protein-like 9 (104 aa).

Residues 1–27 (MKSCQKMEGKPENESEPKHEEEPKPEE) show a composition bias toward basic and acidic residues. The tract at residues 1 to 44 (MKSCQKMEGKPENESEPKHEEEPKPEEKPEEEEKLEEEAKAKGT) is disordered.

The protein belongs to the TFS-II family. TFA subfamily.

It is found in the nucleus. Its function is as follows. May be involved in transcriptional regulation. In Homo sapiens (Human), this protein is Transcription elongation factor A protein-like 9.